The chain runs to 769 residues: Phosphatidylinositol 4-phosphate 5-kinase 8 (769 aa).

MORN repeat units lie at residues 16–38 (YSGQ…DGII), 39–61 (YEGD…SGAK), 62–84 (YEGD…DGSV), 85–107 (YAGA…NSDV), 108–130 (YDGS…NGNR), 131–153 (FIGN…NGDL), 154–176 (FNGF…DGGF), and 177–198 (YFGT…AGSK). A disordered region spans residues 266-289 (PPRDFMHHGPSSKSARSVDSGQSE). Residues 276–288 (SSKSARSVDSGQS) are compositionally biased toward polar residues. The PIPK domain maps to 344–765 (WNHYLMLNLQ…RFIDFLLKVF (422 aa)). Residues 725-746 (YNMKKKVEHTCKSMKYDPMTIS) form an activation loop region.

It carries out the reaction a 1,2-diacyl-sn-glycero-3-phospho-(1D-myo-inositol 4-phosphate) + ATP = a 1,2-diacyl-sn-glycero-3-phospho-(1D-myo-inositol-4,5-bisphosphate) + ADP + H(+). The protein is Phosphatidylinositol 4-phosphate 5-kinase 8 (PIP5K8) of Arabidopsis thaliana (Mouse-ear cress).